Reading from the N-terminus, the 339-residue chain is Dihydroorotate dehydrogenase (quinone) (339 aa).

FMN is bound by residues 64-68 (AGADK) and Thr-88. Lys-68 provides a ligand contact to substrate. Position 113–117 (113–117 (NRNGF)) interacts with substrate. Asn-141 and Asn-174 together coordinate FMN. Asn-174 lines the substrate pocket. Ser-177 (nucleophile) is an active-site residue. Asn-179 is a substrate binding site. Residues Lys-219 and Thr-247 each contribute to the FMN site. Residue 248–249 (NT) participates in substrate binding. Residues Gly-270, Gly-299, and 320 to 321 (YS) each bind FMN.

This sequence belongs to the dihydroorotate dehydrogenase family. Type 2 subfamily. Monomer. FMN is required as a cofactor.

It is found in the cell membrane. The catalysed reaction is (S)-dihydroorotate + a quinone = orotate + a quinol. Its pathway is pyrimidine metabolism; UMP biosynthesis via de novo pathway; orotate from (S)-dihydroorotate (quinone route): step 1/1. In terms of biological role, catalyzes the conversion of dihydroorotate to orotate with quinone as electron acceptor. The protein is Dihydroorotate dehydrogenase (quinone) of Haemophilus influenzae (strain PittGG).